The chain runs to 339 residues: Transmembrane protein 120B (339 aa).

The stretch at 1–67 (MSGQLERCER…KHTLQRYKRH (67 aa)) forms a coiled coil. 6 helical membrane-spanning segments follow: residues 102 to 124 (GLYL…AKFA), 132 to 152 (FKLY…FVLH), 159 to 179 (VFNF…SILI), 187 to 207 (GWWV…LTWP), 270 to 290 (FLLP…VTLF), and 302 to 322 (QVFV…LTTL).

It belongs to the TMEM120 family. Heterooligomer with TMEM120A. As to expression, expressed in inguinal and subcutaneous white adipose tissue and in brown adipose tissue.

It localises to the nucleus inner membrane. Its function is as follows. Necessary for efficient adipogenesis. Does not show ion channel activity. The chain is Transmembrane protein 120B from Mus musculus (Mouse).